Reading from the N-terminus, the 222-residue chain is Large ribosomal subunit protein uL11c (222 aa).

The tract at residues 1–20 (MASSSLSTLCSSTSSSLHPN) is disordered. A chloroplast-targeting transit peptide spans 1 to 62 (MASSSLSTLC…TPRFLTVIAM (62 aa)).

It belongs to the universal ribosomal protein uL11 family. In terms of assembly, part of the ribosomal stalk of the 50S ribosomal subunit. Interacts with L10 and the large rRNA to form the base of the stalk. L10 forms an elongated spine to which L12 dimers bind in a sequential fashion forming a multimeric L10(L12)X complex.

It is found in the plastid. Its subcellular location is the chloroplast. In terms of biological role, forms part of the ribosomal stalk which helps the ribosome interact with GTP-bound translation factors. The sequence is that of Large ribosomal subunit protein uL11c (RPL11) from Arabidopsis thaliana (Mouse-ear cress).